Reading from the N-terminus, the 539-residue chain is Protein pim1 (539 aa).

The interval 1 to 53 is disordered; the sequence is MTSNRSTRSSTKREEVSKNGVEKRELDESDVMKNGKKPVKRAKVSSLPKPVRV. Positions 11 to 33 are enriched in basic and acidic residues; that stretch reads TKREEVSKNGVEKRELDESDVMK. Residues 34-43 show a composition bias toward basic residues; sequence NGKKPVKRAK. RCC1 repeat units lie at residues 70–125, 127–191, 192–243, 244–296, 298–353, 354–417, and 419–472; these read RLNV…ALSH, GRVY…AITD, NGCC…ALTT, TGKV…AIDN, GRVY…ALLE, DGRV…AVTS, and GKVY…IAGI. A disordered region spans residues 478-539; sequence EPVANGIKSE…SVLEPSSTTA (62 aa). Residues 486–504 show a composition bias toward basic and acidic residues; sequence SEPENEKKLKTEETSKTDD. Polar residues predominate over residues 514–525; that stretch reads VTSNGEPSTATS.

Oligomer of dis3, pim1 and spi1. Interacts with ned1.

It localises to the nucleus. Promotes the exchange of Ran(spi1)-bound GDP by GTP. Involved in the control of mitosis. Regulates a variety of nuclear events, including mitotic check-point, chromosome decondensation and mRNA processing/transport. This is Protein pim1 (pim1) from Schizosaccharomyces pombe (strain 972 / ATCC 24843) (Fission yeast).